The primary structure comprises 271 residues: Probable ribosomal RNA small subunit methyltransferase A (271 aa).

Residues Leu-12, Gly-37, Glu-58, Asp-83, and Asn-100 each coordinate S-adenosyl-L-methionine.

This sequence belongs to the class I-like SAM-binding methyltransferase superfamily. rRNA adenine N(6)-methyltransferase family. RsmA subfamily.

Its subcellular location is the cytoplasm. Specifically dimethylates two adjacent adenosines in the loop of a conserved hairpin near the 3'-end of 16S rRNA in the 30S particle. May play a critical role in biogenesis of 30S subunits. In Methanococcus aeolicus (strain ATCC BAA-1280 / DSM 17508 / OCM 812 / Nankai-3), this protein is Probable ribosomal RNA small subunit methyltransferase A.